The sequence spans 390 residues: uncharacterized protein (390 aa).

11 helical membrane passes run 10–30 (LSFC…LPIL), 43–63 (FLIG…QIPF), 81–101 (FMFF…GLII), 134–154 (AIGV…PIIV), 162–182 (IFWI…FFVP), 213–233 (FYLG…MIPN), 246–266 (WKVY…FIFY), 272–292 (ILEN…IIFL), 298–318 (LLFL…LEVF), 341–361 (TSQF…YSFL), and 363–383 (FSQI…FSFF).

The protein belongs to the major facilitator superfamily.

The protein localises to the cell membrane. This is an uncharacterized protein from Buchnera aphidicola subsp. Acyrthosiphon pisum (strain APS) (Acyrthosiphon pisum symbiotic bacterium).